A 366-amino-acid polypeptide reads, in one-letter code: tRNA/tmRNA (uracil-C(5))-methyltransferase (366 aa).

S-adenosyl-L-methionine contacts are provided by Q190, Y218, N223, E239, and D299. C324 functions as the Nucleophile in the catalytic mechanism. Catalysis depends on E358, which acts as the Proton acceptor.

Belongs to the class I-like SAM-binding methyltransferase superfamily. RNA M5U methyltransferase family. TrmA subfamily.

It catalyses the reaction uridine(54) in tRNA + S-adenosyl-L-methionine = 5-methyluridine(54) in tRNA + S-adenosyl-L-homocysteine + H(+). The enzyme catalyses uridine(341) in tmRNA + S-adenosyl-L-methionine = 5-methyluridine(341) in tmRNA + S-adenosyl-L-homocysteine + H(+). Dual-specificity methyltransferase that catalyzes the formation of 5-methyluridine at position 54 (m5U54) in all tRNAs, and that of position 341 (m5U341) in tmRNA (transfer-mRNA). The chain is tRNA/tmRNA (uracil-C(5))-methyltransferase from Citrobacter koseri (strain ATCC BAA-895 / CDC 4225-83 / SGSC4696).